Here is a 395-residue protein sequence, read N- to C-terminus: uncharacterized protein (395 aa).

The next 8 helical transmembrane spans lie at 15-35 (ILAFSFFIAFLVVVSVLVTVF), 56-76 (WPWILLIVLGIVVTLAWNIII), 86-106 (FHAPWWEWVLFACVVQFFQIV), 131-151 (AVLLVTSTGAFWNLAQALITW), 175-195 (WFSFAGMIFDVVVAILFIFIA), 254-274 (LANILIAVVGYFSVFAVFAIV), 298-318 (IAITASNFIPVPSGEGATQFV), and 348-368 (VYIPAILFSLCFIGWVVQVVI).

It localises to the cell membrane. This is an uncharacterized protein from Mycoplasma pneumoniae (strain ATCC 29342 / M129 / Subtype 1) (Mycoplasmoides pneumoniae).